The chain runs to 839 residues: Protein translocase subunit SecA (839 aa).

ATP contacts are provided by residues Gln85, 103–107 (GEGKT), and Asp492. The disordered stretch occupies residues 794-820 (EINYSGPDAGDTKKEPVRRKEKKIGRN). 4 residues coordinate Zn(2+): Cys823, Cys825, Cys834, and Cys835.

This sequence belongs to the SecA family. Monomer and homodimer. Part of the essential Sec protein translocation apparatus which comprises SecA, SecYEG and auxiliary proteins SecDF. Other proteins may also be involved. It depends on Zn(2+) as a cofactor.

It is found in the cell membrane. Its subcellular location is the cytoplasm. It carries out the reaction ATP + H2O + cellular proteinSide 1 = ADP + phosphate + cellular proteinSide 2.. Functionally, part of the Sec protein translocase complex. Interacts with the SecYEG preprotein conducting channel. Has a central role in coupling the hydrolysis of ATP to the transfer of proteins into and across the cell membrane, serving as an ATP-driven molecular motor driving the stepwise translocation of polypeptide chains across the membrane. The chain is Protein translocase subunit SecA from Clostridium acetobutylicum (strain ATCC 824 / DSM 792 / JCM 1419 / IAM 19013 / LMG 5710 / NBRC 13948 / NRRL B-527 / VKM B-1787 / 2291 / W).